The primary structure comprises 462 residues: Cytochrome c biogenesis protein CcsB (462 aa).

Transmembrane regions (helical) follow at residues 30 to 50 (LRVA…GTVI), 89 to 109 (TWWY…CTFR), and 175 to 195 (IGPI…IWGA).

This sequence belongs to the Ccs1/CcsB family. As to quaternary structure, may interact with CcsA.

Its subcellular location is the cellular thylakoid membrane. Its function is as follows. Required during biogenesis of c-type cytochromes (cytochrome c6 and cytochrome f) at the step of heme attachment. The protein is Cytochrome c biogenesis protein CcsB of Picosynechococcus sp. (strain ATCC 27264 / PCC 7002 / PR-6) (Agmenellum quadruplicatum).